Consider the following 196-residue polypeptide: Holliday junction branch migration complex subunit RuvA (196 aa).

The domain I stretch occupies residues 1-65; sequence MIGNLSGTVD…ENTTQLYGFI (65 aa). Positions 66–143 are domain II; that stretch reads NKEEQSCLRL…KLETNNNNFY (78 aa). Positions 144–147 are flexible linker; it reads PINE. The tract at residues 147–196 is domain III; sequence EDAVSALINLGYEKTKVYDTIKKYKPNLDTKDIIRTALKELSNYEIDIMQ.

Belongs to the RuvA family. In terms of assembly, homotetramer. Forms an RuvA(8)-RuvB(12)-Holliday junction (HJ) complex. HJ DNA is sandwiched between 2 RuvA tetramers; dsDNA enters through RuvA and exits via RuvB. An RuvB hexamer assembles on each DNA strand where it exits the tetramer. Each RuvB hexamer is contacted by two RuvA subunits (via domain III) on 2 adjacent RuvB subunits; this complex drives branch migration. In the full resolvosome a probable DNA-RuvA(4)-RuvB(12)-RuvC(2) complex forms which resolves the HJ.

It localises to the cytoplasm. Functionally, the RuvA-RuvB-RuvC complex processes Holliday junction (HJ) DNA during genetic recombination and DNA repair, while the RuvA-RuvB complex plays an important role in the rescue of blocked DNA replication forks via replication fork reversal (RFR). RuvA specifically binds to HJ cruciform DNA, conferring on it an open structure. The RuvB hexamer acts as an ATP-dependent pump, pulling dsDNA into and through the RuvAB complex. HJ branch migration allows RuvC to scan DNA until it finds its consensus sequence, where it cleaves and resolves the cruciform DNA. The sequence is that of Holliday junction branch migration complex subunit RuvA from Wolbachia sp. subsp. Brugia malayi (strain TRS).